Consider the following 267-residue polypeptide: Hydroxyethylthiazole kinase (267 aa).

Position 46 (methionine 46) interacts with substrate. 2 residues coordinate ATP: arginine 122 and serine 168. Glycine 195 provides a ligand contact to substrate.

It belongs to the Thz kinase family. Mg(2+) serves as cofactor.

The catalysed reaction is 5-(2-hydroxyethyl)-4-methylthiazole + ATP = 4-methyl-5-(2-phosphooxyethyl)-thiazole + ADP + H(+). It participates in cofactor biosynthesis; thiamine diphosphate biosynthesis; 4-methyl-5-(2-phosphoethyl)-thiazole from 5-(2-hydroxyethyl)-4-methylthiazole: step 1/1. Functionally, catalyzes the phosphorylation of the hydroxyl group of 4-methyl-5-beta-hydroxyethylthiazole (THZ). The polypeptide is Hydroxyethylthiazole kinase (Nitratidesulfovibrio vulgaris (strain ATCC 29579 / DSM 644 / CCUG 34227 / NCIMB 8303 / VKM B-1760 / Hildenborough) (Desulfovibrio vulgaris)).